Here is a 945-residue protein sequence, read N- to C-terminus: Bifunctional glutamine synthetase adenylyltransferase/adenylyl-removing enzyme (945 aa).

Positions 1–440 are adenylyl removase; that stretch reads MMPLSPQLQQ…VFNELIGDDE (440 aa). Residues 449–945 are adenylyl transferase; the sequence is AEYWRELWQD…SASWQKWLMA (497 aa).

The protein belongs to the GlnE family. Mg(2+) is required as a cofactor.

It catalyses the reaction [glutamine synthetase]-O(4)-(5'-adenylyl)-L-tyrosine + phosphate = [glutamine synthetase]-L-tyrosine + ADP. The catalysed reaction is [glutamine synthetase]-L-tyrosine + ATP = [glutamine synthetase]-O(4)-(5'-adenylyl)-L-tyrosine + diphosphate. Its function is as follows. Involved in the regulation of glutamine synthetase GlnA, a key enzyme in the process to assimilate ammonia. When cellular nitrogen levels are high, the C-terminal adenylyl transferase (AT) inactivates GlnA by covalent transfer of an adenylyl group from ATP to specific tyrosine residue of GlnA, thus reducing its activity. Conversely, when nitrogen levels are low, the N-terminal adenylyl removase (AR) activates GlnA by removing the adenylyl group by phosphorolysis, increasing its activity. The regulatory region of GlnE binds the signal transduction protein PII (GlnB) which indicates the nitrogen status of the cell. The sequence is that of Bifunctional glutamine synthetase adenylyltransferase/adenylyl-removing enzyme from Klebsiella pneumoniae subsp. pneumoniae (strain ATCC 700721 / MGH 78578).